Reading from the N-terminus, the 233-residue chain is Putative N-acetylmannosamine-6-phosphate 2-epimerase (233 aa).

The protein belongs to the NanE family.

The enzyme catalyses an N-acyl-D-glucosamine 6-phosphate = an N-acyl-D-mannosamine 6-phosphate. It functions in the pathway amino-sugar metabolism; N-acetylneuraminate degradation; D-fructose 6-phosphate from N-acetylneuraminate: step 3/5. Functionally, converts N-acetylmannosamine-6-phosphate (ManNAc-6-P) to N-acetylglucosamine-6-phosphate (GlcNAc-6-P). The sequence is that of Putative N-acetylmannosamine-6-phosphate 2-epimerase from Yersinia pseudotuberculosis serotype O:1b (strain IP 31758).